The following is a 103-amino-acid chain: Salivary thrombin inhibitor anophelin (103 aa).

Positions 1–21 are cleaved as a signal peptide; sequence MASKLFVLAFLCLALVVVVQS. A disordered region spans residues 24–103; the sequence is QYARGDVPTY…PAASSSESDE (80 aa). Residues 56–68 are blocks exosite I of host thrombin; sequence EEFDPSLLEEHAD. The tract at residues 74–77 is blocks active site cleft of host thrombin in a reverse direction compared to substrates; that stretch reads DPGR. Positions 91–103 are enriched in low complexity; the sequence is ASAPAASSSESDE.

The protein belongs to the anophelin family. As to quaternary structure, interacts with human F2 (thrombin); the interaction results in thrombin inhibition. In terms of tissue distribution, female salivary gland (at protein level). Not detected in female midgut, head, carcass and male tissues (at protein level).

Its subcellular location is the secreted. With respect to regulation, increasing concentration of NaCl decreases affinity for thrombin. Functionally, salivary protein with anticoagulant activity that inhibits host thrombin (F2); binds to the proteinase in a reverse orientation (opposite to substrates). This chain is Salivary thrombin inhibitor anophelin, found in Anopheles gambiae (African malaria mosquito).